The following is a 423-amino-acid chain: Growth hormone-releasing hormone receptor (423 aa).

Residues 1–22 form the signal peptide; that stretch reads MDGLMWATRILCLLSLCGVTLG. Residues 23–130 are Extracellular-facing; sequence HLHLECDFIT…KEKSYFSTVK (108 aa). 3 disulfides stabilise this stretch: cysteine 41–cysteine 64, cysteine 55–cysteine 96, and cysteine 78–cysteine 112. N-linked (GlcNAc...) asparagine glycosylation is found at asparagine 49 and asparagine 50. Residues 131 to 151 form a helical membrane-spanning segment; it reads IIYTTGHSISIVALCVAIAIL. The Cytoplasmic portion of the chain corresponds to 152-167; the sequence is VALRRLHCPRNYIHTQ. Residues 168–188 form a helical membrane-spanning segment; sequence LFATFILKASAVFLKDAAIFQ. Residues 189–210 lie on the Extracellular side of the membrane; that stretch reads GDSTDHCSMSTVLCKVSVAISH. Residues 211-231 traverse the membrane as a helical segment; it reads LATMTNFSWLLAEAVYLSCLL. Residues 232–240 are Cytoplasmic-facing; the sequence is ASTSPRSKP. Residues 241 to 261 traverse the membrane as a helical segment; sequence AFWWLVLAGWGLPVLCTGTWV. Residues 262-283 are Extracellular-facing; it reads GCKLAFEDTECWDLDNSSPCWW. Residues 284–304 traverse the membrane as a helical segment; that stretch reads IIKGPIVLSVGVNFGLFLNII. Residues 305-331 lie on the Cytoplasmic side of the membrane; sequence CILLRKLEPAQGGLHTRAQYWRLSKST. A helical transmembrane segment spans residues 332 to 352; that stretch reads LLLIPLFGIHYIIFNFLPDSA. Topologically, residues 353–357 are extracellular; the sequence is GLDIR. The chain crosses the membrane as a helical span at residues 358–378; it reads VPLELGLGSFQGFIVAVLYCF. The Cytoplasmic segment spans residues 379–423; sequence LNQEVRTEISRKWYGHDPELLPARRTCTEWTTPPRSRLKVLTSEC.

It belongs to the G-protein coupled receptor 2 family. As to expression, pituitary gland.

It localises to the cell membrane. Its function is as follows. Receptor for GRF, coupled to G proteins which activate adenylyl cyclase. Stimulates somatotroph cell growth, growth hormone gene transcription and growth hormone secretion. The chain is Growth hormone-releasing hormone receptor (Ghrhr) from Mus musculus (Mouse).